Reading from the N-terminus, the 671-residue chain is TOM1-like protein 6 (671 aa).

At alanine 2 the chain carries N-acetylalanine. A VHS domain is found at 15 to 144 (ATSDLLLGPD…ELRRSGVEFP (130 aa)). Serine 147 carries the phosphoserine modification. The GAT domain maps to 229 to 317 (EVEGLSLSSI…LLAKHDAIAS (89 aa)). Disordered regions lie at residues 320–620 (PLPV…VGQK) and 636–671 (GSAD…RKMI). Low complexity predominate over residues 334 to 362 (ASKPADSSPKSSEAKDSSSIAGSSSPIPA). Acidic residues predominate over residues 372 to 382 (DEEYEEEEDEF). A compositionally biased stretch (polar residues) spans 395 to 405 (SVTTDPTSLES). Residues 407–417 (NAASNALALAL) show a composition bias toward low complexity. The span at 444 to 459 (STPPAPSSQPSPPPPA) shows a compositional bias: pro residues. The span at 483–554 (AQQQQPQQPQ…QPSTRPQNPY (72 aa)) shows a compositional bias: low complexity. Polar residues-rich tracts occupy residues 562–598 (ASTS…NSFP) and 605–616 (QATSTASNSGVS). Serine 596 is subject to Phosphoserine. Residues 647–663 (NSSNGSQNLSGSQTQQS) are compositionally biased toward low complexity.

Belongs to the TOM1 family. In terms of tissue distribution, ubiquitously expressed.

It localises to the endosome. The protein localises to the multivesicular body. Its subcellular location is the cytoplasm. It is found in the early endosome membrane. Its function is as follows. Acts as a gatekeeper for degradative protein sorting to the vacuole. Plays a role in recognition of ubiquitinated PIN2 auxin carrier at the plasma membrane and further to its endocytic sorting. Binds ubiquitin in vitro. Might contribute to the loading of the ESCRT machinery. The protein is TOM1-like protein 6 of Arabidopsis thaliana (Mouse-ear cress).